Consider the following 312-residue polypeptide: Atrochrysone carboxyl ACP thioesterase AacuM (312 aa).

Zn(2+)-binding residues include His-103, His-105, Asp-107, and His-108. Residue Asp-107 is the Proton donor/acceptor of the active site.

The protein belongs to the metallo-beta-lactamase superfamily. Zn(2+) serves as cofactor.

The enzyme catalyses atrochrysone carboxyl-[ACP] + H2O = atrochrysone carboxylate + holo-[ACP] + H(+). Its pathway is secondary metabolite biosynthesis. Atrochrysone carboxyl ACP thioesterase; part of the gene cluster that mediates the biosynthesis of the tetrahydroxanthone dimer secalonic acid D. The pathway begins with the synthesis of atrochrysone thioester by the polyketide synthase AacuL. The atrochrysone carboxyl ACP thioesterase AacuM then breaks the thioester bond and releases the atrochrysone carboxylic acid from AacuL. Atrochrysone carboxylic acid is decarboxylated by the decarboxylase AacuI, and oxidized by the anthrone oxygenase AacuG to yield emodin. Emodin is then reduced to emodin hydroquinone by a yet unidentified oxidoreductase. A-ring reduction by the short chain dehydrogenase AacuN, dehydration by the scytalone dehydratase-like protein AacuK and probable spontaneous re-oxidation, results in overall deoxygenation to chrysophanol. Baeyer-Villiger oxidation by the Baeyer-Villiger monooxygenase (BVMO) AacuH then yields monodictyphenone. Monodictyphenone is transformed into compounds with the tetrahydroxanthone skeleton via methylesterification by the methyltransferase AacuQ, followed by the action of the flavin-dependent monooxygenase AacuC, the isomerase AacuP, and the short chain dehydrogenase/reductase AacuF or AacuD. AacuF and AacuD should accept the same compound as a substrate but perform the ketoreduction with a different stereoselectivity, thus yielding blennolides B and A, respectively. In the final step of the biosynthesis, the cytochrome P450 monooxygenase AacuE accepts blennolide B and/or blennolide A to conduct the dimerization reaction to furnish the tetrahydroxanthone dimers, secalonic acids D, B, and F. This chain is Atrochrysone carboxyl ACP thioesterase AacuM, found in Aspergillus aculeatus (strain ATCC 16872 / CBS 172.66 / WB 5094).